The chain runs to 447 residues: Polyamine export protein (447 aa).

At 1-4 (MLNS) the chain is on the cytoplasmic side. Residues 1 to 197 (MLNSILVILC…ALAGVLRKQE (197 aa)) form the CNNM transmembrane domain. The helical transmembrane segment at 5-25 (ILVILCLIAVSAFFSMSEISL) threads the bilayer. Over 26 to 54 (AASRKIKLKLLADEGNINAQRVLNMQENP) the chain is Periplasmic. The chain crosses the membrane as a helical span at residues 55–75 (GMFFTVVQIGLNAVAILGGIV). Over 76-99 (GDAAFSPAFHSLFSRYMSAELSEQ) the chain is Cytoplasmic. The chain crosses the membrane as a helical span at residues 100–120 (LSFILSFSLVTGMFILFADLT). Residues 121–141 (PKRIGMIAPEAVALRIINPMR) are Periplasmic-facing. A helical transmembrane segment spans residues 142–162 (FCLYVCTPLVWFFNGLANIIF). The Cytoplasmic segment spans residues 163–447 (RIFKLPMVRK…DAKDKEESVA (285 aa)). 2 CBS domains span residues 216 to 275 (MTPR…NQSL) and 282 to 343 (QIRN…GLEE).

The protein belongs to the UPF0053 family. PaeA subfamily.

It localises to the cell inner membrane. In terms of biological role, involved in cadaverine and putrescine tolerance in stationary phase. May facilitate the efflux of both cadaverine and putrescine from the cytoplasm, reducing potentially toxic levels under certain stress conditions. This is Polyamine export protein from Escherichia coli O157:H7.